We begin with the raw amino-acid sequence, 135 residues long: Large ribosomal subunit protein uL16c (135 aa).

This sequence belongs to the universal ribosomal protein uL16 family. Part of the 50S ribosomal subunit.

It localises to the plastid. The protein resides in the chloroplast. The chain is Large ribosomal subunit protein uL16c from Aethionema cordifolium (Lebanon stonecress).